Reading from the N-terminus, the 316-residue chain is uncharacterized protein (316 aa).

Belongs to the chlamydial CPn_0441/CT_007/TC_0275 family.

This is an uncharacterized protein from Chlamydia trachomatis serovar D (strain ATCC VR-885 / DSM 19411 / UW-3/Cx).